The primary structure comprises 101 residues: Urease subunit beta (101 aa).

The protein belongs to the urease beta subunit family. In terms of assembly, heterotrimer of UreA (gamma), UreB (beta) and UreC (alpha) subunits. Three heterotrimers associate to form the active enzyme.

The protein localises to the cytoplasm. It carries out the reaction urea + 2 H2O + H(+) = hydrogencarbonate + 2 NH4(+). Its pathway is nitrogen metabolism; urea degradation; CO(2) and NH(3) from urea (urease route): step 1/1. The polypeptide is Urease subunit beta (Burkholderia vietnamiensis (strain G4 / LMG 22486) (Burkholderia cepacia (strain R1808))).